The following is a 419-amino-acid chain: UDP-N-acetylglucosamine 1-carboxyvinyltransferase (419 aa).

22-23 is a binding site for phosphoenolpyruvate; that stretch reads KN. Arginine 93 contacts UDP-N-acetyl-alpha-D-glucosamine. Residue cysteine 117 is the Proton donor of the active site. Cysteine 117 is subject to 2-(S-cysteinyl)pyruvic acid O-phosphothioketal. UDP-N-acetyl-alpha-D-glucosamine is bound by residues aspartate 307 and isoleucine 329.

It belongs to the EPSP synthase family. MurA subfamily.

It is found in the cytoplasm. It carries out the reaction phosphoenolpyruvate + UDP-N-acetyl-alpha-D-glucosamine = UDP-N-acetyl-3-O-(1-carboxyvinyl)-alpha-D-glucosamine + phosphate. It participates in cell wall biogenesis; peptidoglycan biosynthesis. Functionally, cell wall formation. Adds enolpyruvyl to UDP-N-acetylglucosamine. This is UDP-N-acetylglucosamine 1-carboxyvinyltransferase from Shewanella sp. (strain ANA-3).